The following is a 187-amino-acid chain: UPF0340 protein SPJ_0612 (187 aa).

This sequence belongs to the UPF0340 family.

In Streptococcus pneumoniae (strain JJA), this protein is UPF0340 protein SPJ_0612.